A 264-amino-acid polypeptide reads, in one-letter code: DNA-binding HTH-type transcriptional repressor TrmBL2 (264 aa).

The stretch at 81–113 forms a coiled coil; it reads LEKFIEEWQERVKEELEAKKKAKEELIELMKPL.

This sequence belongs to the transcriptional regulator TrmB family.

It localises to the cytoplasm. Its subcellular location is the chromosome. In terms of biological role, an abundant chromosomal protein that seems to be involved in both genome architecture and transcription repression. Incubation with DNA in vitro gives fibrous structures 14.2 +/- 2.1 nm in thickness (naked DNA is 1.83 +/- 0.37 nm); does not significantly compact DNA. Binds to both coding and non-coding regions; binding within gene promoters correlates with decreased transcript levels, while binding within coding regions does not. The polypeptide is DNA-binding HTH-type transcriptional repressor TrmBL2 (Thermococcus kodakarensis (strain ATCC BAA-918 / JCM 12380 / KOD1) (Pyrococcus kodakaraensis (strain KOD1))).